We begin with the raw amino-acid sequence, 213 residues long: Octanoyltransferase (213 aa).

The 176-residue stretch at 32-207 (ENSHDEIWLV…NILALLNNPP (176 aa)) folds into the BPL/LPL catalytic domain. Residues 71 to 78 (RGGQVTYH), 138 to 140 (SLG), and 151 to 153 (GLA) each bind substrate. Cys169 serves as the catalytic Acyl-thioester intermediate.

It belongs to the LipB family.

Its subcellular location is the cytoplasm. The enzyme catalyses octanoyl-[ACP] + L-lysyl-[protein] = N(6)-octanoyl-L-lysyl-[protein] + holo-[ACP] + H(+). It participates in protein modification; protein lipoylation via endogenous pathway; protein N(6)-(lipoyl)lysine from octanoyl-[acyl-carrier-protein]: step 1/2. In terms of biological role, catalyzes the transfer of endogenously produced octanoic acid from octanoyl-acyl-carrier-protein onto the lipoyl domains of lipoate-dependent enzymes. Lipoyl-ACP can also act as a substrate although octanoyl-ACP is likely to be the physiological substrate. The chain is Octanoyltransferase from Salmonella paratyphi A (strain ATCC 9150 / SARB42).